The primary structure comprises 407 residues: Argininosuccinate synthase (407 aa).

An ATP-binding site is contributed by 10–18 (AYSGGLDTS). L-citrulline-binding residues include tyrosine 88 and serine 93. Glycine 118 contributes to the ATP binding site. Residues threonine 120, asparagine 124, and aspartate 125 each contribute to the L-aspartate site. Asparagine 124 serves as a coordination point for L-citrulline. 5 residues coordinate L-citrulline: arginine 128, serine 177, serine 186, glutamate 263, and tyrosine 275.

The protein belongs to the argininosuccinate synthase family. Type 1 subfamily. As to quaternary structure, homotetramer.

Its subcellular location is the cytoplasm. It carries out the reaction L-citrulline + L-aspartate + ATP = 2-(N(omega)-L-arginino)succinate + AMP + diphosphate + H(+). It functions in the pathway amino-acid biosynthesis; L-arginine biosynthesis; L-arginine from L-ornithine and carbamoyl phosphate: step 2/3. The chain is Argininosuccinate synthase from Clostridium botulinum (strain Alaska E43 / Type E3).